Here is a 250-residue protein sequence, read N- to C-terminus: Transmembrane ascorbate-dependent reductase CYB561 (250 aa).

At M1 the chain carries N-acetylmethionine. Over 1 to 15 (MEHSSASVPAALPYY) the chain is Cytoplasmic. The helical transmembrane segment at 16–36 (VAFSQLLGLTVVAVTGAWLGL) threads the bilayer. The Cytochrome b561 domain occupies 18–219 (FSQLLGLTVV…FGVVVLYILA (202 aa)). Topologically, residues 37–50 (YRGGIAWESSLQFN) are vesicular. A helical transmembrane segment spans residues 51–71 (VHPLCMVIGMIFLQGDALLVY). Residues H52, R72, and K79 each contribute to the heme b site. At 72-83 (RVFRREAKRTTK) the chain is on the cytoplasmic side. L-ascorbate-binding residues include K79 and K83. The helical transmembrane segment at 84–104 (ILHGLLHVFAFIIALVGLVAV) threads the bilayer. Residues H86, 115–118 (DLYS), and H120 each bind heme b. Over 105–123 (FDYHKKKGYADLYSLHSWC) the chain is Vesicular. Residues 124–144 (GILVFVLYFVQWLVGFSFFLF) form a helical membrane-spanning segment. Topologically, residues 145–157 (PGASFSLRSRYRP) are cytoplasmic. Residue R152 participates in L-ascorbate binding. A helical membrane pass occupies residues 158–178 (QHIFFGATIFLFSVGTALLGL). Positions 159 and 180 each coordinate heme b. Topologically, residues 179 to 197 (KEALLFKLGSKYSTFEPEG) are vesicular. Residues 198–218 (VLANVLGLLLVCFGVVVLYIL) traverse the membrane as a helical segment. Topologically, residues 219 to 250 (AQADWKRPSQAEEQALSMDFKTLTEGDSPSPQ) are cytoplasmic. K224 is a heme b binding site. Phosphoserine occurs at positions 246 and 248.

Heme b serves as cofactor. Abundantly distributed in a number of neuroendocrine tissues.

Its subcellular location is the cytoplasmic vesicle. The protein resides in the secretory vesicle. It localises to the chromaffin granule membrane. The catalysed reaction is monodehydro-L-ascorbate radical(out) + L-ascorbate(in) = monodehydro-L-ascorbate radical(in) + L-ascorbate(out). Transmembrane reductase that uses ascorbate as an electron donor in the cytoplasm and transfers electrons across membranes to reduce monodehydro-L-ascorbate radical in the lumen of secretory vesicles. It is therefore involved the regeneration and homeostasis within secretory vesicles of ascorbate which in turn provides reducing equivalents needed to support the activity of intravesicular enzymes. The polypeptide is Transmembrane ascorbate-dependent reductase CYB561 (Mus musculus (Mouse)).